The following is an 864-amino-acid chain: Microtubule-associated protein TORTIFOLIA1 (864 aa).

Residues 1-26 form a disordered region; the sequence is MSTPTTSGSAAKPTRPARSSSLATRS. A compositionally biased stretch (polar residues) spans 17–26; sequence ARSSSLATRS. HEAT repeat units lie at residues 76-113, 117-154, 167-204, 208-245, and 248-285; these read ETLP…LHCD, AHLT…IYLK, LAVG…SAAS, TSFQ…VGAI, and QSLE…HSSG. The tract at residues 329 to 353 is disordered; the sequence is DGASDDSKLSASEQLGSEKNGEKRS. Ser-414 carries the phosphoserine modification. Residues 426–504 form a disordered region; sequence NDEEESGLDD…QSEGSFTSNR (79 aa). Over residues 439 to 448 the composition is skewed to polar residues; that stretch reads MGSSNRLKNT. Basic and acidic residues predominate over residues 449 to 459; the sequence is QADDKQVKGRF. Polar residues predominate over residues 489–504; it reads VSNTDNQSEGSFTSNR. Positions 508–561 form a coiled coil; it reads SAIQRQLLQLERQQTNLMNMLQEFIGGSHDSMVTLEGRVRGLERIVEDMARDLS. A disordered region spans residues 615–670; that stretch reads DDWFIPPHAASRNGQAGPRRSPRSEQYENEHMGNGRRGWDNKASGTIRFGEGPSAR. The span at 636 to 654 shows a compositional bias: basic and acidic residues; it reads PRSEQYENEHMGNGRRGWD.

In terms of assembly, interacts with WAV3. In terms of tissue distribution, expressed in roots, hypocotyls, stems, flowers, siliques, inflorescences, petioles, cotyledons, and leaves. Particularly present in root tips and shoot meristems.

It localises to the cytoplasm. The protein localises to the cytoskeleton. Functionally, plant-specific microtubule-associated protein (MAP) that regulates the orientation of cortical microtubules and the direction of organ growth. Determines microtubule organization by modulating microtubule severing. The chain is Microtubule-associated protein TORTIFOLIA1 from Arabidopsis thaliana (Mouse-ear cress).